A 249-amino-acid polypeptide reads, in one-letter code: DNA repair protein RecO (249 aa).

It belongs to the RecO family.

In terms of biological role, involved in DNA repair and RecF pathway recombination. In Leptospira biflexa serovar Patoc (strain Patoc 1 / Ames), this protein is DNA repair protein RecO.